Here is a 344-residue protein sequence, read N- to C-terminus: uncharacterized protein (344 aa).

Residues 1-19 form the signal peptide; it reads MRIIFYLTLLLFIFNKVKS. Positions 323 to 344 are cleaved as a propeptide — removed in mature form; sequence SATRNQISIMVLILSVLLVLIL.

It is found in the cell membrane. This is an uncharacterized protein from Dictyostelium discoideum (Social amoeba).